Here is a 220-residue protein sequence, read N- to C-terminus: UPF0319 protein YccT (220 aa).

The first 20 residues, 1–20, serve as a signal peptide directing secretion; the sequence is MKTGALTTFLALCLPVTVFA.

Belongs to the UPF0319 family.

This Salmonella choleraesuis (strain SC-B67) protein is UPF0319 protein YccT.